We begin with the raw amino-acid sequence, 357 residues long: NAD-dependent protein deacetylase HST2 (357 aa).

Position 2 is an N-acetylserine (Ser-2). The 280-residue stretch at 5-284 folds into the Deacetylase sirtuin-type domain; it reads TASTEMSVRK…EQLVEELGWQ (280 aa). NAD(+) is bound by residues 32–52 and 115–118; these read GAGISTSCGIPDFRSPGTGLY and QNID. His-135 serves as the catalytic Proton acceptor. Residues Cys-143, Cys-146, Cys-170, and Cys-173 each contribute to the Zn(2+) site. NAD(+) is bound by residues 223–225, 248–250, and Ser-270; these read GTS and NLE. Residues 317 to 329 are compositionally biased toward basic and acidic residues; it reads LDQSEHESADKKD. Residues 317–357 form a disordered region; it reads LDQSEHESADKKDKKLQRLNGHDSDEDGASNSSSSQKAAKE. Ser-340 carries the post-translational modification Phosphoserine.

It belongs to the sirtuin family. Class I subfamily. As to quaternary structure, homotrimer. Monomer. Homotrimeric in its unliganded state. Undergoes a trimer-monomer transition upon acetyl-lysine substrate binding. Zn(2+) serves as cofactor.

The protein resides in the cytoplasm. It localises to the nucleus. It carries out the reaction N(6)-acetyl-L-lysyl-[protein] + NAD(+) + H2O = 2''-O-acetyl-ADP-D-ribose + nicotinamide + L-lysyl-[protein]. Inhibited by ADP-ribose and nicotinamide. In terms of biological role, NAD-dependent histone deacetylase that is involved in nuclear silencing events. Derepresses subtelomeric silencing and increases repression in nucleolar (rDNA) silencing. Its function is negatively regulated by active nuclear export. This is NAD-dependent protein deacetylase HST2 (HST2) from Saccharomyces cerevisiae (strain ATCC 204508 / S288c) (Baker's yeast).